The chain runs to 77 residues: Acyl carrier protein (77 aa).

The region spanning 1 to 76 (MENFDKVKDI…DAVNFINNLE (76 aa)) is the Carrier domain. Ser-36 carries the post-translational modification O-(pantetheine 4'-phosphoryl)serine.

The protein belongs to the acyl carrier protein (ACP) family. Post-translationally, 4'-phosphopantetheine is transferred from CoA to a specific serine of apo-ACP by AcpS. This modification is essential for activity because fatty acids are bound in thioester linkage to the sulfhydryl of the prosthetic group.

It localises to the cytoplasm. It participates in lipid metabolism; fatty acid biosynthesis. Its function is as follows. Carrier of the growing fatty acid chain in fatty acid biosynthesis. The polypeptide is Acyl carrier protein (Staphylococcus carnosus (strain TM300)).